The following is a 491-amino-acid chain: Nicotinamide phosphoribosyltransferase (491 aa).

The residue at position 1 (Met-1) is an N-acetylmethionine. Tyr-188 is subject to Phosphotyrosine. Arg-196 provides a ligand contact to diphosphate. Beta-nicotinamide D-ribonucleotide is bound at residue Asp-219. Residues His-247 and Arg-311 each coordinate diphosphate. Residues 311 to 313 (RPD), 353 to 354 (GD), Gly-384, and Arg-392 each bind beta-nicotinamide D-ribonucleotide. Ser-472 carries the phosphoserine modification.

The protein belongs to the NAPRTase family. Homodimer. Expressed in various tissues. At the highest level in liver and at the second highest in heart. The amount is higher in heart than in lung.

The protein localises to the nucleus. Its subcellular location is the cytoplasm. It localises to the secreted. It carries out the reaction beta-nicotinamide D-ribonucleotide + diphosphate = 5-phospho-alpha-D-ribose 1-diphosphate + nicotinamide + H(+). The protein operates within cofactor biosynthesis; NAD(+) biosynthesis; nicotinamide D-ribonucleotide from 5-phospho-alpha-D-ribose 1-diphosphate and nicotinamide: step 1/1. Functionally, catalyzes the condensation of nicotinamide with 5-phosphoribosyl-1-pyrophosphate to yield nicotinamide mononucleotide, an intermediate in the biosynthesis of NAD. It is the rate limiting component in the mammalian NAD biosynthesis pathway. The secreted form behaves both as a cytokine with immunomodulating properties and an adipokine with anti-diabetic properties, it has no enzymatic activity, partly because of lack of activation by ATP, which has a low level in extracellular space and plasma. Plays a role in the modulation of circadian clock function. NAMPT-dependent oscillatory production of NAD regulates oscillation of clock target gene expression by releasing the core clock component: CLOCK-BMAL1 heterodimer from NAD-dependent SIRT1-mediated suppression. The sequence is that of Nicotinamide phosphoribosyltransferase (Nampt) from Rattus norvegicus (Rat).